Consider the following 320-residue polypeptide: MIKKIGVLTSGGDAPGMNAAIRGVVRSALTEGLEVMGIYDGYLGLYEDRMVQLDRYSVSDMINRGGTFLGSARFPEFRDENIRAVAIENLKKRGIDALVVIGGDGSYMGAMRLTEMGFPCIGLPGTIDNDIKGTDYTIGFFTALSTVVEAIDRLRDTSSSHQRISVVEVMGRYCGDLTLAAAIAGGCEFVVVPEVEFSREDLVNEIKAGIAKGKKHAIVAITEHMCDVDELAHFIEKETGRETRATVLGHIQRGGSPVPYDRILASRMGAYAIDLLLAGYGGRCVGIQNEQLVHHDIIDAIENMKRPFKGDWLDCAKKLY.

Gly-12 contributes to the ATP binding site. Residues 22 to 26 (RGVVR) and 55 to 60 (RYSVSD) contribute to the ADP site. Residues 73-74 (RF) and 103-106 (GDGS) contribute to the ATP site. Asp-104 provides a ligand contact to Mg(2+). Residue 126–128 (TID) participates in substrate binding. Asp-128 (proton acceptor) is an active-site residue. Arg-155 is a binding site for ADP. Residues Arg-163 and 170–172 (MGR) contribute to the substrate site. ADP-binding positions include 186–188 (GCE), Lys-212, and 214–216 (KKH). Substrate-binding positions include Glu-223, Arg-244, and 250–253 (HIQR).

The protein belongs to the phosphofructokinase type A (PFKA) family. ATP-dependent PFK group I subfamily. Prokaryotic clade 'B1' sub-subfamily. In terms of assembly, homotetramer. It depends on Mg(2+) as a cofactor.

Its subcellular location is the cytoplasm. It carries out the reaction beta-D-fructose 6-phosphate + ATP = beta-D-fructose 1,6-bisphosphate + ADP + H(+). The protein operates within carbohydrate degradation; glycolysis; D-glyceraldehyde 3-phosphate and glycerone phosphate from D-glucose: step 3/4. With respect to regulation, allosterically activated by ADP and other diphosphonucleosides, and allosterically inhibited by phosphoenolpyruvate. Functionally, catalyzes the phosphorylation of D-fructose 6-phosphate to fructose 1,6-bisphosphate by ATP, the first committing step of glycolysis. The chain is ATP-dependent 6-phosphofructokinase isozyme 1 from Shigella boydii serotype 18 (strain CDC 3083-94 / BS512).